The primary structure comprises 98 residues: NADH-ubiquinone oxidoreductase chain 4L (98 aa).

Helical transmembrane passes span 1 to 21 (MTPLNINLTMAFFLALAGVLI), 28 to 48 (STLLCLEGMMLSLFILLSLLI), and 59 to 79 (APLILLVFSACEAGVGLALLV).

The protein belongs to the complex I subunit 4L family. Core subunit of respiratory chain NADH dehydrogenase (Complex I) which is composed of 45 different subunits.

It localises to the mitochondrion inner membrane. It catalyses the reaction a ubiquinone + NADH + 5 H(+)(in) = a ubiquinol + NAD(+) + 4 H(+)(out). Core subunit of the mitochondrial membrane respiratory chain NADH dehydrogenase (Complex I) which catalyzes electron transfer from NADH through the respiratory chain, using ubiquinone as an electron acceptor. Part of the enzyme membrane arm which is embedded in the lipid bilayer and involved in proton translocation. The protein is NADH-ubiquinone oxidoreductase chain 4L (MT-ND4L) of Tarsipes rostratus (Honey possum).